The following is a 465-amino-acid chain: MSIKISETLTFECETGNYHTFCPISCVAWLYQKIEDSFFLVVGTKTCGYFLQNALGVMIFAEPRYAMAELEEGDISAQLNDYEELKRLCVQIKKDRNPSVIIWIGTCTTEIIKMDLEGMAPKLENEIEIPIVVARANGLDYAFTQGEDTVLAAMAHRCPEQKTEIEKKIDDKSIQELFSFLPLKTKEKSNKSFTLKNTFSLVLFGSLPSTVASQLSLELKRQSIHVSGWLPAQRYTDLPILGDKVYVCGVNPFLSRTATTLMRRRKCKLIGAPFPIGPDGTRAWIEKICSVFNIETQGLEEREQQVWESLKNYLNLVRGKSVFFMGDNLLEISLARFLIRCGMIVYEIGIPYMDKRYQAAELTLLQETCKKMCIPMPRIVEKPDNYNQIQRMRELQPDLAITGMAHANPLEARGINTKWSVEFTFAQIHGFTNAKDVLELVTRPLRRNNNLENLGWTNLIKIQKR.

3 residues coordinate [4Fe-4S] cluster: cysteine 22, cysteine 47, and cysteine 107.

Belongs to the BchN/ChlN family. As to quaternary structure, protochlorophyllide reductase is composed of three subunits; ChlL, ChlN and ChlB. Forms a heterotetramer of two ChlB and two ChlN subunits. [4Fe-4S] cluster is required as a cofactor.

It localises to the plastid. It is found in the chloroplast. It carries out the reaction chlorophyllide a + oxidized 2[4Fe-4S]-[ferredoxin] + 2 ADP + 2 phosphate = protochlorophyllide a + reduced 2[4Fe-4S]-[ferredoxin] + 2 ATP + 2 H2O. Its pathway is porphyrin-containing compound metabolism; chlorophyll biosynthesis (light-independent). Functionally, component of the dark-operative protochlorophyllide reductase (DPOR) that uses Mg-ATP and reduced ferredoxin to reduce ring D of protochlorophyllide (Pchlide) to form chlorophyllide a (Chlide). This reaction is light-independent. The NB-protein (ChlN-ChlB) is the catalytic component of the complex. This chain is Light-independent protochlorophyllide reductase subunit N, found in Marchantia polymorpha (Common liverwort).